The following is a 183-amino-acid chain: uncharacterized protein (183 aa).

The first 29 residues, 1–29 (MQCWQQPFLRFLQQPFFLATASLAGSSSS), serve as a signal peptide directing secretion. The segment at 149-183 (PGSTCDGSLKGRAYPSCVPKRDPEHSREESHPLSG) is disordered. A compositionally biased stretch (basic and acidic residues) spans 167–183 (PKRDPEHSREESHPLSG).

The protein resides in the secreted. This is an uncharacterized protein from Homo sapiens (Human).